The following is a 396-amino-acid chain: NADH-quinone oxidoreductase subunit D 1 (396 aa).

It belongs to the complex I 49 kDa subunit family. NDH-1 is composed of 14 different subunits. Subunits NuoB, C, D, E, F, and G constitute the peripheral sector of the complex.

Its subcellular location is the cell inner membrane. The enzyme catalyses a quinone + NADH + 5 H(+)(in) = a quinol + NAD(+) + 4 H(+)(out). In terms of biological role, NDH-1 shuttles electrons from NADH, via FMN and iron-sulfur (Fe-S) centers, to quinones in the respiratory chain. The immediate electron acceptor for the enzyme in this species is believed to be ubiquinone. Couples the redox reaction to proton translocation (for every two electrons transferred, four hydrogen ions are translocated across the cytoplasmic membrane), and thus conserves the redox energy in a proton gradient. The polypeptide is NADH-quinone oxidoreductase subunit D 1 (Nitrobacter hamburgensis (strain DSM 10229 / NCIMB 13809 / X14)).